The following is a 534-amino-acid chain: Light-independent protochlorophyllide reductase subunit B (534 aa).

Asp-36 is a [4Fe-4S] cluster binding site. The active-site Proton donor is the Asp-274. Substrate is bound at residue 409-410; sequence GL. Residues 426-446 form a disordered region; sequence DEAGPSHHGGKAVPASAPRAD.

Belongs to the ChlB/BchB/BchZ family. As to quaternary structure, protochlorophyllide reductase is composed of three subunits; BchL, BchN and BchB. Forms a heterotetramer of two BchB and two BchN subunits. Requires [4Fe-4S] cluster as cofactor.

It catalyses the reaction chlorophyllide a + oxidized 2[4Fe-4S]-[ferredoxin] + 2 ADP + 2 phosphate = protochlorophyllide a + reduced 2[4Fe-4S]-[ferredoxin] + 2 ATP + 2 H2O. It participates in porphyrin-containing compound metabolism; bacteriochlorophyll biosynthesis (light-independent). Component of the dark-operative protochlorophyllide reductase (DPOR) that uses Mg-ATP and reduced ferredoxin to reduce ring D of protochlorophyllide (Pchlide) to form chlorophyllide a (Chlide). This reaction is light-independent. The NB-protein (BchN-BchB) is the catalytic component of the complex. This chain is Light-independent protochlorophyllide reductase subunit B, found in Cereibacter sphaeroides (strain ATCC 17023 / DSM 158 / JCM 6121 / CCUG 31486 / LMG 2827 / NBRC 12203 / NCIMB 8253 / ATH 2.4.1.) (Rhodobacter sphaeroides).